We begin with the raw amino-acid sequence, 269 residues long: Tryptophan synthase alpha chain (269 aa).

Residues glutamate 49 and aspartate 60 each act as proton acceptor in the active site.

Belongs to the TrpA family. In terms of assembly, tetramer of two alpha and two beta chains.

The catalysed reaction is (1S,2R)-1-C-(indol-3-yl)glycerol 3-phosphate + L-serine = D-glyceraldehyde 3-phosphate + L-tryptophan + H2O. It functions in the pathway amino-acid biosynthesis; L-tryptophan biosynthesis; L-tryptophan from chorismate: step 5/5. Functionally, the alpha subunit is responsible for the aldol cleavage of indoleglycerol phosphate to indole and glyceraldehyde 3-phosphate. This chain is Tryptophan synthase alpha chain, found in Proteus mirabilis (strain HI4320).